Consider the following 119-residue polypeptide: Large ribosomal subunit protein bL20 (119 aa).

This sequence belongs to the bacterial ribosomal protein bL20 family.

Binds directly to 23S ribosomal RNA and is necessary for the in vitro assembly process of the 50S ribosomal subunit. It is not involved in the protein synthesizing functions of that subunit. This is Large ribosomal subunit protein bL20 from Bradyrhizobium sp. (strain ORS 278).